A 564-amino-acid chain; its full sequence is Arginine--tRNA ligase (564 aa).

Residues 122–132 (PNIAKPFSIGH) carry the 'HIGH' region motif.

It belongs to the class-I aminoacyl-tRNA synthetase family. In terms of assembly, monomer.

Its subcellular location is the cytoplasm. The catalysed reaction is tRNA(Arg) + L-arginine + ATP = L-arginyl-tRNA(Arg) + AMP + diphosphate. The sequence is that of Arginine--tRNA ligase from Lactococcus lactis subsp. lactis (strain IL1403) (Streptococcus lactis).